Here is a 1414-residue protein sequence, read N- to C-terminus: Protein KATNIP homolog (1414 aa).

7 disordered regions span residues 1-32 (MHGK…DEKH), 80-116 (QQST…PGKI), 139-158 (GPNT…NEDQ), 712-731 (VSAT…NDLT), 756-783 (SSSS…TFTN), 823-861 (KMDN…SEKY), and 924-943 (QQQK…SLMP). Composition is skewed to basic and acidic residues over residues 10-32 (RKND…DEKH) and 86-101 (LARE…DDGC). A compositionally biased stretch (acidic residues) spans 147–158 (DFESDDDMNEDQ). Polar residues-rich tracts occupy residues 832–843 (NFSNQSSYNSDR) and 924–940 (QQQK…NGSS).

It is found in the cytoplasm. The protein localises to the cytoskeleton. Its subcellular location is the cilium axoneme. The protein resides in the cilium basal body. May control cilium integrity. The polypeptide is Protein KATNIP homolog (Xenopus laevis (African clawed frog)).